The following is a 215-amino-acid chain: Probable phosphoglycerate mutase GpmB (215 aa).

Residues 8–15 (RHGETQWN), 21–22 (QG), Arg-58, Arg-60, 82–85 (ELDM), 104–105 (RR), and 151–152 (GI) each bind substrate. His-9 (tele-phosphohistidine intermediate) is an active-site residue. Residue Glu-82 is the Proton donor/acceptor of the active site.

This sequence belongs to the phosphoglycerate mutase family. GpmB subfamily.

The catalysed reaction is (2R)-2-phosphoglycerate = (2R)-3-phosphoglycerate. It participates in carbohydrate degradation; glycolysis; pyruvate from D-glyceraldehyde 3-phosphate: step 3/5. This is Probable phosphoglycerate mutase GpmB from Klebsiella pneumoniae (strain 342).